A 361-amino-acid polypeptide reads, in one-letter code: Chitinase-3-like protein 1 (361 aa).

Positions Tyr-1–Val-361 constitute a GH18 domain. A disulfide bridge connects residues Cys-5 and Cys-30. Asn-39 is a glycosylation site (N-linked (GlcNAc...) asparagine). Chitin contacts are provided by residues Glu-49 to Trp-50, Gly-76 to Asn-79, Tyr-120, Leu-183 to Asp-186, and Arg-241. Cys-278 and Cys-342 form a disulfide bridge. Residues Gln-302–Ala-316 are important for AKT1 activation and IL8 production. Trp-330 provides a ligand contact to chitin. N-linked (GlcNAc...) asparagine glycosylation is present at Asn-345.

Belongs to the glycosyl hydrolase 18 family. Monomer. As to expression, detected in mammary gland.

It localises to the secreted. The protein localises to the extracellular space. It is found in the cytoplasm. The protein resides in the perinuclear region. Its subcellular location is the endoplasmic reticulum. Carbohydrate-binding lectin with a preference for chitin. Has no chitinase activity. May play a role in tissue remodeling and in the capacity of cells to respond to and cope with changes in their environment. Plays a role in T-helper cell type 2 (Th2) inflammatory response and IL-13-induced inflammation, regulating allergen sensitization, inflammatory cell apoptosis, dendritic cell accumulation and M2 macrophage differentiation. Facilitates invasion of pathogenic enteric bacteria into colonic mucosa and lymphoid organs. Mediates activation of AKT1 signaling pathway and subsequent IL8 production in colonic epithelial cells. Regulates antibacterial responses in lung by contributing to macrophage bacterial killing, controlling bacterial dissemination and augmenting host tolerance. Also regulates hyperoxia-induced injury, inflammation and epithelial apoptosis in lung. In Ovis aries (Sheep), this protein is Chitinase-3-like protein 1 (CHI3L1).